The following is a 58-amino-acid chain: Small ribosomal subunit protein bS21 (58 aa).

Positions I32 to S42 are enriched in basic and acidic residues. The disordered stretch occupies residues I32–K58. Positions V43–K58 are enriched in basic residues.

It belongs to the bacterial ribosomal protein bS21 family.

This is Small ribosomal subunit protein bS21 from Lachnoclostridium phytofermentans (strain ATCC 700394 / DSM 18823 / ISDg) (Clostridium phytofermentans).